The primary structure comprises 367 residues: GDSL esterase/lipase At4g28780 (367 aa).

Positions 1 to 28 (MSTFLLTWIIMTVALSVTLFLMPQQTNA) are cleaved as a signal peptide. Serine 38 acts as the Nucleophile in catalysis. An N-linked (GlcNAc...) asparagine glycan is attached at asparagine 119. Catalysis depends on residues aspartate 328 and histidine 331. A glycan (N-linked (GlcNAc...) asparagine) is linked at asparagine 356.

It belongs to the 'GDSL' lipolytic enzyme family.

The protein resides in the secreted. This is GDSL esterase/lipase At4g28780 from Arabidopsis thaliana (Mouse-ear cress).